A 272-amino-acid chain; its full sequence is Probable prolyl 4-hydroxylase 11 (272 aa).

The Cytoplasmic segment spans residues 1 to 55 (MSKSTSVSTILYLRQRLQGLKIYETSDLIQHINTFDELVGEQVSVDVKIEEKTKD). Residues 56–80 (MILLCSLSPLLTTLTCSMVKVAASL) form a helical; Signal-anchor for type II membrane protein membrane-spanning segment. The Lumenal segment spans residues 81–272 (RFPNERWLEV…KRHCLSLNLF (192 aa)). Positions 179–272 (NGETLQVINY…KRHCLSLNLF (94 aa)) constitute a Fe2OG dioxygenase domain. Positions 197, 199, and 261 each coordinate Fe cation.

Belongs to the P4HA family. Requires Fe(2+) as cofactor. The cofactor is L-ascorbate.

It is found in the endoplasmic reticulum membrane. The catalysed reaction is L-prolyl-[collagen] + 2-oxoglutarate + O2 = trans-4-hydroxy-L-prolyl-[collagen] + succinate + CO2. Functionally, catalyzes the post-translational formation of 4-hydroxyproline in -Xaa-Pro-Gly- sequences in proline-rich peptide sequences of plant glycoproteins and other proteins. Hydroxyprolines are important constituent of many plant cell wall glycoproteins such as extensins, hydroxyproline-rich glycoproteins, lectins and arabinogalactan proteins. This is Probable prolyl 4-hydroxylase 11 from Arabidopsis thaliana (Mouse-ear cress).